A 391-amino-acid polypeptide reads, in one-letter code: 23S rRNA (uracil(747)-C(5))-methyltransferase RlmC (391 aa).

4 residues coordinate [4Fe-4S] cluster: cysteine 5, cysteine 13, cysteine 16, and cysteine 95. Residues glutamine 220, phenylalanine 249, glutamate 276, and asparagine 322 each contribute to the S-adenosyl-L-methionine site. Cysteine 349 serves as the catalytic Nucleophile.

It belongs to the class I-like SAM-binding methyltransferase superfamily. RNA M5U methyltransferase family. RlmC subfamily.

The enzyme catalyses uridine(747) in 23S rRNA + S-adenosyl-L-methionine = 5-methyluridine(747) in 23S rRNA + S-adenosyl-L-homocysteine + H(+). Its function is as follows. Catalyzes the formation of 5-methyl-uridine at position 747 (m5U747) in 23S rRNA. The sequence is that of 23S rRNA (uracil(747)-C(5))-methyltransferase RlmC from Actinobacillus pleuropneumoniae serotype 3 (strain JL03).